Reading from the N-terminus, the 218-residue chain is Pyridoxine/pyridoxamine 5'-phosphate oxidase (218 aa).

Substrate contacts are provided by residues 14 to 17 (RREY) and Lys72. Residues 67-72 (RIVLLK), 82-83 (YT), Arg88, Lys89, and Gln111 each bind FMN. The substrate site is built by Tyr129, Arg133, and Ser137. Residues 146-147 (QS) and Trp191 contribute to the FMN site. 197-199 (RLH) is a binding site for substrate. FMN is bound at residue Arg201.

Belongs to the pyridoxamine 5'-phosphate oxidase family. Homodimer. FMN is required as a cofactor.

The catalysed reaction is pyridoxamine 5'-phosphate + O2 + H2O = pyridoxal 5'-phosphate + H2O2 + NH4(+). It catalyses the reaction pyridoxine 5'-phosphate + O2 = pyridoxal 5'-phosphate + H2O2. It functions in the pathway cofactor metabolism; pyridoxal 5'-phosphate salvage; pyridoxal 5'-phosphate from pyridoxamine 5'-phosphate: step 1/1. It participates in cofactor metabolism; pyridoxal 5'-phosphate salvage; pyridoxal 5'-phosphate from pyridoxine 5'-phosphate: step 1/1. Functionally, catalyzes the oxidation of either pyridoxine 5'-phosphate (PNP) or pyridoxamine 5'-phosphate (PMP) into pyridoxal 5'-phosphate (PLP). This is Pyridoxine/pyridoxamine 5'-phosphate oxidase from Cronobacter sakazakii (strain ATCC BAA-894) (Enterobacter sakazakii).